An 84-amino-acid polypeptide reads, in one-letter code: Tenecin-1 (84 aa).

An N-terminal signal peptide occupies residues 1 to 19 (MKLTIFALVACFFILQIAA). A propeptide spanning residues 20–41 (FPLEEAATAEEIEQGEHIRVKR) is cleaved from the precursor. 3 disulfide bridges follow: Cys-44/Cys-75, Cys-61/Cys-81, and Cys-65/Cys-83.

Belongs to the invertebrate defensin family. Type 1 subfamily.

The protein resides in the secreted. Its function is as follows. Bactericidal protein produced in response to injury. It is cytotoxic to Gram-positive bacteria. This chain is Tenecin-1, found in Tenebrio molitor (Yellow mealworm beetle).